The following is a 156-amino-acid chain: Aspartate 1-decarboxylase (156 aa).

Ser-26 acts as the Schiff-base intermediate with substrate; via pyruvic acid in catalysis. The residue at position 26 (Ser-26) is a Pyruvic acid (Ser). Thr-58 contributes to the substrate binding site. Tyr-59 functions as the Proton donor in the catalytic mechanism. 74–76 (GGA) is a binding site for substrate.

This sequence belongs to the PanD family. Heterooctamer of four alpha and four beta subunits. The cofactor is pyruvate. In terms of processing, is synthesized initially as an inactive proenzyme, which is activated by self-cleavage at a specific serine bond to produce a beta-subunit with a hydroxyl group at its C-terminus and an alpha-subunit with a pyruvoyl group at its N-terminus.

It is found in the cytoplasm. It carries out the reaction L-aspartate + H(+) = beta-alanine + CO2. Its pathway is cofactor biosynthesis; (R)-pantothenate biosynthesis; beta-alanine from L-aspartate: step 1/1. In terms of biological role, catalyzes the pyruvoyl-dependent decarboxylation of aspartate to produce beta-alanine. This is Aspartate 1-decarboxylase from Gloeothece citriformis (strain PCC 7424) (Cyanothece sp. (strain PCC 7424)).